A 1143-amino-acid polypeptide reads, in one-letter code: Exportin-T (1143 aa).

Residues 566 to 593 (ARNKLRAAQGSGRTTPSSSDNVDLGPSS) are disordered. Positions 576–593 (SGRTTPSSSDNVDLGPSS) are enriched in polar residues.

This sequence belongs to the exportin family.

The protein resides in the nucleus. It localises to the cytoplasm. Functionally, tRNA nucleus export receptor which facilitates tRNA translocation across the nuclear pore complex. Involved in pre-tRNA splicing, probably by affecting the interaction of pre-tRNA with splicing endonuclease. This Cryptococcus neoformans var. neoformans serotype D (strain JEC21 / ATCC MYA-565) (Filobasidiella neoformans) protein is Exportin-T (LOS1).